The chain runs to 257 residues: 5-oxoprolinase subunit A (257 aa).

It belongs to the LamB/PxpA family. Forms a complex composed of PxpA, PxpB and PxpC.

The catalysed reaction is 5-oxo-L-proline + ATP + 2 H2O = L-glutamate + ADP + phosphate + H(+). Catalyzes the cleavage of 5-oxoproline to form L-glutamate coupled to the hydrolysis of ATP to ADP and inorganic phosphate. The chain is 5-oxoprolinase subunit A from Halalkalibacterium halodurans (strain ATCC BAA-125 / DSM 18197 / FERM 7344 / JCM 9153 / C-125) (Bacillus halodurans).